The chain runs to 150 residues: Cell division protein SepF (150 aa).

It belongs to the SepF family. As to quaternary structure, homodimer. Interacts with FtsZ.

Its subcellular location is the cytoplasm. Cell division protein that is part of the divisome complex and is recruited early to the Z-ring. Probably stimulates Z-ring formation, perhaps through the cross-linking of FtsZ protofilaments. Its function overlaps with FtsA. The sequence is that of Cell division protein SepF from Clostridium botulinum (strain ATCC 19397 / Type A).